We begin with the raw amino-acid sequence, 368 residues long: DnaJ homolog subfamily C member 25 (368 aa).

Residues Met-25–Leu-47 form a helical membrane-spanning segment. A J domain is found at Val-57–Leu-132. Helical transmembrane passes span Ile-158–Ser-178 and Ile-252–Val-272.

This sequence belongs to the DNAJC25 family.

The protein localises to the membrane. The sequence is that of DnaJ homolog subfamily C member 25 (dnajc25) from Xenopus tropicalis (Western clawed frog).